A 1027-amino-acid chain; its full sequence is 2-oxoglutarate dehydrogenase, mitochondrial (1027 aa).

Arg-315, Asp-413, Asn-446, Ile-448, and Gln-674 together coordinate thiamine diphosphate. Asp-413, Asn-446, and Ile-448 together coordinate Mg(2+).

This sequence belongs to the alpha-ketoglutarate dehydrogenase family. In terms of assembly, homodimer. Component of the 2-oxoglutarate dehydrogenase complex. Requires thiamine diphosphate as cofactor. Mg(2+) serves as cofactor.

The protein localises to the mitochondrion matrix. The catalysed reaction is N(6)-[(R)-lipoyl]-L-lysyl-[protein] + 2-oxoglutarate + H(+) = N(6)-[(R)-S(8)-succinyldihydrolipoyl]-L-lysyl-[protein] + CO2. In terms of biological role, the 2-oxoglutarate dehydrogenase complex catalyzes the overall conversion of 2-oxoglutarate to succinyl-CoA and CO(2). It contains multiple copies of three enzymatic components: 2-oxoglutarate dehydrogenase (E1), dihydrolipoamide succinyltransferase (E2) and lipoamide dehydrogenase (E3). The chain is 2-oxoglutarate dehydrogenase, mitochondrial (ogdh-1) from Caenorhabditis briggsae.